Reading from the N-terminus, the 206-residue chain is Urease accessory protein UreG (206 aa).

A GTP-binding site is contributed by 12–19 (GPVGSGKT).

This sequence belongs to the SIMIBI class G3E GTPase family. UreG subfamily. In terms of assembly, homodimer. UreD, UreF and UreG form a complex that acts as a GTP-hydrolysis-dependent molecular chaperone, activating the urease apoprotein by helping to assemble the nickel containing metallocenter of UreC. The UreE protein probably delivers the nickel.

The protein localises to the cytoplasm. In terms of biological role, facilitates the functional incorporation of the urease nickel metallocenter. This process requires GTP hydrolysis, probably effectuated by UreG. The chain is Urease accessory protein UreG from Synechocystis sp. (strain ATCC 27184 / PCC 6803 / Kazusa).